The primary structure comprises 412 residues: Putative competence-damage inducible protein (412 aa).

The protein belongs to the CinA family.

This Bacillus cytotoxicus (strain DSM 22905 / CIP 110041 / 391-98 / NVH 391-98) protein is Putative competence-damage inducible protein.